The primary structure comprises 258 residues: Deoxyribose-phosphate aldolase 2 (258 aa).

Residue Asp102 is the Proton donor/acceptor of the active site. The Schiff-base intermediate with acetaldehyde role is filled by Lys165. Lys199 (proton donor/acceptor) is an active-site residue.

It belongs to the DeoC/FbaB aldolase family. DeoC type 2 subfamily.

It is found in the cytoplasm. It catalyses the reaction 2-deoxy-D-ribose 5-phosphate = D-glyceraldehyde 3-phosphate + acetaldehyde. It participates in carbohydrate degradation; 2-deoxy-D-ribose 1-phosphate degradation; D-glyceraldehyde 3-phosphate and acetaldehyde from 2-deoxy-alpha-D-ribose 1-phosphate: step 2/2. Its function is as follows. Catalyzes a reversible aldol reaction between acetaldehyde and D-glyceraldehyde 3-phosphate to generate 2-deoxy-D-ribose 5-phosphate. The polypeptide is Deoxyribose-phosphate aldolase 2 (deoC2) (Vibrio vulnificus (strain YJ016)).